A 215-amino-acid polypeptide reads, in one-letter code: UPF0502 protein YceH (215 aa).

An N6-acetyllysine modification is found at lysine 80.

The protein belongs to the UPF0502 family.

The protein is UPF0502 protein YceH of Escherichia coli O127:H6 (strain E2348/69 / EPEC).